The primary structure comprises 236 residues: Movement and silencing protein TGBp1 (236 aa).

The (+)RNA virus helicase ATP-binding domain occupies 1-117 (MDHIHHLLSS…DNLFEPHYTL (117 aa)). Residues 118-236 (EITYRFGPNT…LGPDAFDSSP (119 aa)) enclose the (+)RNA virus helicase C-terminal domain.

This sequence belongs to the Tymovirales TGBp1 protein family. Homodimer and homooligomer. Interacts with capsid protein. Interacts with host AGO1; this interaction targets the host protein for degradation, thereby suppressing the antiviral RNA silencing.

It is found in the host cytoplasm. Functionally, transports viral genome to neighboring plant cells directly through plasmosdesmata, without any budding. The movement protein allows efficient cell to cell propagation, by bypassing the host cell wall barrier. Increases plasmodesma size exclusion limit. Acts as a suppressor of RNA-mediated gene silencing, also known as post-transcriptional gene silencing (PTGS), a mechanism of plant viral defense that limits the accumulation of viral RNAs. This White clover mosaic virus (strain O) (WCMV) protein is Movement and silencing protein TGBp1.